Consider the following 3396-residue polypeptide: Versican core protein (3396 aa).

An N-terminal signal peptide occupies residues 1–20; sequence MFINIKSILWMCSTLIVTHA. The Ig-like V-type domain occupies 21–146; the sequence is LHKVKVGKSP…EDTQDTVSLT (126 aa). 5 disulfides stabilise this stretch: cysteine 44/cysteine 130, cysteine 172/cysteine 243, cysteine 196/cysteine 217, cysteine 270/cysteine 345, and cysteine 294/cysteine 315. An N-linked (GlcNAc...) asparagine glycan is attached at asparagine 57. 2 Link domains span residues 150 to 245 and 251 to 347; these read VVFH…YCYV and DVFH…YCFK. Asparagine 330 is a glycosylation site (N-linked (GlcNAc...) asparagine). The GAG-alpha (glucosaminoglycan attachment domain) stretch occupies residues 348-1335; the sequence is PKEATTIDLS…IIEVRENKTG (988 aa). Over residues 420 to 430 the composition is skewed to polar residues; sequence ATKLPTPTGST. Disordered stretches follow at residues 420-439 and 603-622; these read ATKL…MDDY and STTV…MDDW. Asparagine 615 carries N-linked (GlcNAc...) asparagine glycosylation. Serine 659 carries O-linked (Xyl...) (chondroitin sulfate) serine glycosylation. Asparagine 782 and asparagine 809 each carry an N-linked (GlcNAc...) asparagine glycan. Disordered regions lie at residues 807–829, 1126–1154, and 1277–1316; these read EDNT…LPPA, IGPK…TSSL, and REYF…PAST. Positions 811 to 824 are enriched in polar residues; that stretch reads TSKPLESTEPSASS. Positions 1143–1154 are enriched in low complexity; the sequence is EGSSTTGFTSSL. N-linked (GlcNAc...) asparagine glycosylation is found at asparagine 1332 and asparagine 1398. The interval 1336–3089 is GAG-beta; that stretch reads RMSDLSVIGH…VEGTAIYLPG (1754 aa). Disordered stretches follow at residues 1420-1497 and 1510-1539; these read VPKD…SGGE and FESG…HTEP. A compositionally biased stretch (basic and acidic residues) spans 1422-1433; sequence KDPEAAEARRGQ. Residues asparagine 1442 and asparagine 1468 are each glycosylated (N-linked (GlcNAc...) asparagine). Positions 1469 to 1480 are enriched in low complexity; sequence ESTETTESLEVT. The segment covering 1517–1538 has biased composition (basic and acidic residues); the sequence is KGAESVTERDTEVGHQAHEHTE. 2 O-linked (Xyl...) (chondroitin sulfate) serine glycosylation sites follow: serine 1548 and serine 1631. Asparagine 1663 carries an N-linked (GlcNAc...) asparagine glycan. Disordered regions lie at residues 1717–1737 and 1759–1789; these read STTV…TAST and PNVA…MTDS. Over residues 1720–1729 the composition is skewed to basic and acidic residues; the sequence is VEEKKRKEEE. Over residues 1760–1781 the composition is skewed to polar residues; sequence NVATSSDSGTRKSFMSLTTPTQ. Residue asparagine 1898 is glycosylated (N-linked (GlcNAc...) asparagine). 2 O-linked (Xyl...) (chondroitin sulfate) serine glycosylation sites follow: serine 1935 and serine 1959. Disordered regions lie at residues 1962–1994, 2107–2134, and 2168–2188; these read AAFR…STMV, RQEI…NSPA, and KEMK…PDAN. Residues 1969–1978 show a composition bias toward low complexity; the sequence is TSPSTVPTSV. Residues 2111-2120 are compositionally biased toward acidic residues; it reads ESETTSEEQI. Position 2116 is a phosphoserine; by FAM20C (serine 2116). An N-linked (GlcNAc...) asparagine glycan is attached at asparagine 2179. Residues serine 2247 and serine 2254 are each glycosylated (O-linked (Xyl...) (chondroitin sulfate) serine). Residues asparagine 2272, asparagine 2280, asparagine 2360, asparagine 2385, and asparagine 2392 are each glycosylated (N-linked (GlcNAc...) asparagine). Disordered regions lie at residues 2371–2396, 2445–2473, 2493–2518, and 2598–2617; these read TSRP…ETTT, SATT…EVPS, SEQN…STDG, and DTEV…DDST. 2 stretches are compositionally biased toward polar residues: residues 2445-2461 and 2496-2513; these read SATT…TFVS and NKSS…VSYE. Asparagine 2496 carries an N-linked (GlcNAc...) asparagine glycan. Serine 2608 is modified (phosphoserine). A Phosphothreonine modification is found at threonine 2617. A glycan (N-linked (GlcNAc...) asparagine) is linked at asparagine 2628. Serine 2722, serine 2723, and serine 2767 each carry an O-linked (Xyl...) (chondroitin sulfate) serine glycan. Disordered regions lie at residues 2834-2856 and 2881-2905; these read GSEA…DVGS and EEYL…EDDG. The span at 2896 to 2905 shows a compositional bias: basic and acidic residues; it reads TKLEPSEDDG. N-linked (GlcNAc...) asparagine glycosylation is present at asparagine 2934. Serine 2941 is a glycosylation site (O-linked (Xyl...) (chondroitin sulfate) serine). N-linked (GlcNAc...) asparagine glycosylation is present at asparagine 3067. One can recognise an EGF-like 1 domain in the interval 3089–3125; it reads GPDRCKMNPCLNGGTCYPTETSYVCTCVPGYSGDQCE. Intrachain disulfides connect cysteine 3093–cysteine 3104, cysteine 3098–cysteine 3113, cysteine 3115–cysteine 3124, cysteine 3131–cysteine 3142, cysteine 3136–cysteine 3151, cysteine 3153–cysteine 3162, cysteine 3169–cysteine 3180, cysteine 3197–cysteine 3289, cysteine 3265–cysteine 3281, cysteine 3296–cysteine 3339, and cysteine 3325–cysteine 3352. In terms of domain architecture, EGF-like 2; calcium-binding spans 3127–3163; it reads DFDECHSNPCRNGATCVDGFNTFRCLCLPSYVGALCE. The C-type lectin domain maps to 3176–3290; that stretch reads FQGQCYKYFA…CNYHLTYTCK (115 aa). A Sushi domain is found at 3294 to 3354; the sequence is VACGQPPVVE…WAIPKITCMN (61 aa). N-linked (GlcNAc...) asparagine glycans are attached at residues asparagine 3369 and asparagine 3379. Positions 3371-3380 are enriched in polar residues; that stretch reads SSAKDNSINT. The segment at 3371 to 3396 is disordered; the sequence is SSAKDNSINTSKHDHRWSRRWQESRR.

Belongs to the aggrecan/versican proteoglycan family. In terms of assembly, interacts with FBLN1. Post-translationally, phosphorylated by FAM20C in the extracellular medium. Proteolytically cleaved by ADAMTS5 and ADAMTS15 in the pericellular matrix surrounding myoblasts, facilitating myoblast contact and fusion which is required for skeletal muscle development and regeneration. Detected in placenta (at protein level). Detected in cerebrospinal fluid, fibroblasts and urine (at protein level). Expressed in the retina (at protein level). Cerebral white matter and plasma. Isoform V0: Expressed in normal brain, gliomas, medulloblastomas, schwannomas, neurofibromas, and meningiomas. Isoform V1: Expressed in normal brain, gliomas, medulloblastomas, schwannomas, neurofibromas, and meningiomas. Isoform V2: Restricted to normal brain and gliomas. Isoform V3: Found in all these tissues except medulloblastomas.

Its subcellular location is the secreted. It localises to the extracellular space. The protein resides in the extracellular matrix. It is found in the cell projection. The protein localises to the cilium. Its subcellular location is the photoreceptor outer segment. It localises to the interphotoreceptor matrix. Functionally, may play a role in intercellular signaling and in connecting cells with the extracellular matrix. May take part in the regulation of cell motility, growth and differentiation. Binds hyaluronic acid. This chain is Versican core protein (VCAN), found in Homo sapiens (Human).